A 1056-amino-acid polypeptide reads, in one-letter code: Carbamoyl phosphate synthase large chain (1056 aa).

The interval 1 to 397 (MPRRTDIKKV…GFKKALRSID (397 aa)) is carboxyphosphate synthetic domain. 12 residues coordinate ATP: Arg127, Arg167, Gly173, Gly174, Glu206, Val208, Glu213, Gly239, Val240, His241, Gln282, and Glu294. The ATP-grasp 1 domain maps to 131-323 (KALMQKIGEP…IARVAAKIAI (193 aa)). The Mg(2+) site is built by Gln282, Glu294, and Asn296. Mn(2+) contacts are provided by Gln282, Glu294, and Asn296. Residues 398 to 530 (TDINTHTNHN…YSTHGVTTDI (133 aa)) are oligomerization domain. Positions 531-919 (IQNDKKKVLI…YKACISADNE (389 aa)) are carbamoyl phosphate synthetic domain. One can recognise an ATP-grasp 2 domain in the interval 661–852 (SELLDALKIP…LAKVAAKVMI (192 aa)). Arg697, Ser736, Leu738, Glu743, Gly768, Val769, His770, Ser771, Gln811, and Glu823 together coordinate ATP. Mg(2+) contacts are provided by Gln811, Glu823, and Asn825. Mn(2+) is bound by residues Gln811, Glu823, and Asn825. Positions 918 to 1056 (NELPIEGNVF…PISHYLSEVE (139 aa)) constitute an MGS-like domain. Positions 920 to 1056 (LPIEGNVFIS…PISHYLSEVE (137 aa)) are allosteric domain.

It belongs to the CarB family. As to quaternary structure, composed of two chains; the small (or glutamine) chain promotes the hydrolysis of glutamine to ammonia, which is used by the large (or ammonia) chain to synthesize carbamoyl phosphate. Tetramer of heterodimers (alpha,beta)4. It depends on Mg(2+) as a cofactor. Mn(2+) serves as cofactor.

The catalysed reaction is hydrogencarbonate + L-glutamine + 2 ATP + H2O = carbamoyl phosphate + L-glutamate + 2 ADP + phosphate + 2 H(+). It catalyses the reaction hydrogencarbonate + NH4(+) + 2 ATP = carbamoyl phosphate + 2 ADP + phosphate + 2 H(+). It participates in amino-acid biosynthesis; L-arginine biosynthesis; carbamoyl phosphate from bicarbonate: step 1/1. Its pathway is pyrimidine metabolism; UMP biosynthesis via de novo pathway; (S)-dihydroorotate from bicarbonate: step 1/3. In terms of biological role, large subunit of the glutamine-dependent carbamoyl phosphate synthetase (CPSase). CPSase catalyzes the formation of carbamoyl phosphate from the ammonia moiety of glutamine, carbonate, and phosphate donated by ATP, constituting the first step of 2 biosynthetic pathways, one leading to arginine and/or urea and the other to pyrimidine nucleotides. The large subunit (synthetase) binds the substrates ammonia (free or transferred from glutamine from the small subunit), hydrogencarbonate and ATP and carries out an ATP-coupled ligase reaction, activating hydrogencarbonate by forming carboxy phosphate which reacts with ammonia to form carbamoyl phosphate. This chain is Carbamoyl phosphate synthase large chain, found in Methanosphaerula palustris (strain ATCC BAA-1556 / DSM 19958 / E1-9c).